The following is a 348-amino-acid chain: Major outer membrane protein P.IB (348 aa).

The signal sequence occupies residues 1 to 19 (MKKSLIALTLAALPVAAMA).

It belongs to the Gram-negative porin family. In terms of assembly, homotrimer.

The protein localises to the cell outer membrane. Serves as a slightly cation selective porin. Major antigen on the gonococcal cell surface and it may have pathogenic properties in addition to its porin activity. The polypeptide is Major outer membrane protein P.IB (porB) (Neisseria gonorrhoeae).